The following is an 801-amino-acid chain: Leucine--tRNA ligase (801 aa).

A 'HIGH' region motif is present at residues 40 to 51 (PYPSGAGLHVGH). The 'KMSKS' region motif lies at 576–580 (KMSKS). Residue Lys-579 coordinates ATP.

It belongs to the class-I aminoacyl-tRNA synthetase family.

The protein localises to the cytoplasm. It catalyses the reaction tRNA(Leu) + L-leucine + ATP = L-leucyl-tRNA(Leu) + AMP + diphosphate. In Exiguobacterium sibiricum (strain DSM 17290 / CCUG 55495 / CIP 109462 / JCM 13490 / 255-15), this protein is Leucine--tRNA ligase.